A 453-amino-acid polypeptide reads, in one-letter code: Tubulin beta-1 chain (453 aa).

Residues glutamine 12, glutamate 71, serine 140, glycine 144, threonine 145, glycine 146, asparagine 206, and asparagine 228 each contribute to the GTP site. Mg(2+) is bound at residue glutamate 71. The segment at 431-453 is disordered; it reads TADGVEGYEEEGYENDHPEDDEE. Residues 436-453 show a composition bias toward acidic residues; that stretch reads EGYEEEGYENDHPEDDEE.

It belongs to the tubulin family. In terms of assembly, dimer of alpha and beta chains. A typical microtubule is a hollow water-filled tube with an outer diameter of 25 nm and an inner diameter of 15 nM. Alpha-beta heterodimers associate head-to-tail to form protofilaments running lengthwise along the microtubule wall with the beta-tubulin subunit facing the microtubule plus end conferring a structural polarity. Microtubules usually have 13 protofilaments but different protofilament numbers can be found in some organisms and specialized cells. Mg(2+) is required as a cofactor.

The protein resides in the cytoplasm. It localises to the cytoskeleton. Its function is as follows. Tubulin is the major constituent of microtubules, a cylinder consisting of laterally associated linear protofilaments composed of alpha- and beta-tubulin heterodimers. Microtubules grow by the addition of GTP-tubulin dimers to the microtubule end, where a stabilizing cap forms. Below the cap, tubulin dimers are in GDP-bound state, owing to GTPase activity of alpha-tubulin. This is Tubulin beta-1 chain (TUBB) from Chondrus crispus (Carrageen Irish moss).